We begin with the raw amino-acid sequence, 103 residues long: Large ribosomal subunit protein uL24 (103 aa).

The protein belongs to the universal ribosomal protein uL24 family. Part of the 50S ribosomal subunit.

In terms of biological role, one of two assembly initiator proteins, it binds directly to the 5'-end of the 23S rRNA, where it nucleates assembly of the 50S subunit. One of the proteins that surrounds the polypeptide exit tunnel on the outside of the subunit. The sequence is that of Large ribosomal subunit protein uL24 from Endomicrobium trichonymphae.